A 260-amino-acid polypeptide reads, in one-letter code: Thiazole synthase (260 aa).

Lys-102 serves as the catalytic Schiff-base intermediate with DXP. Residues Gly-163, 189–190, and 211–212 contribute to the 1-deoxy-D-xylulose 5-phosphate site; these read AG and NT.

Belongs to the ThiG family. As to quaternary structure, homotetramer. Forms heterodimers with either ThiH or ThiS.

It localises to the cytoplasm. It catalyses the reaction [ThiS sulfur-carrier protein]-C-terminal-Gly-aminoethanethioate + 2-iminoacetate + 1-deoxy-D-xylulose 5-phosphate = [ThiS sulfur-carrier protein]-C-terminal Gly-Gly + 2-[(2R,5Z)-2-carboxy-4-methylthiazol-5(2H)-ylidene]ethyl phosphate + 2 H2O + H(+). Its pathway is cofactor biosynthesis; thiamine diphosphate biosynthesis. Its function is as follows. Catalyzes the rearrangement of 1-deoxy-D-xylulose 5-phosphate (DXP) to produce the thiazole phosphate moiety of thiamine. Sulfur is provided by the thiocarboxylate moiety of the carrier protein ThiS. In vitro, sulfur can be provided by H(2)S. In Geobacter metallireducens (strain ATCC 53774 / DSM 7210 / GS-15), this protein is Thiazole synthase.